A 251-amino-acid chain; its full sequence is 3-deoxy-manno-octulosonate cytidylyltransferase (251 aa).

It belongs to the KdsB family.

Its subcellular location is the cytoplasm. The enzyme catalyses 3-deoxy-alpha-D-manno-oct-2-ulosonate + CTP = CMP-3-deoxy-beta-D-manno-octulosonate + diphosphate. It participates in nucleotide-sugar biosynthesis; CMP-3-deoxy-D-manno-octulosonate biosynthesis; CMP-3-deoxy-D-manno-octulosonate from 3-deoxy-D-manno-octulosonate and CTP: step 1/1. It functions in the pathway bacterial outer membrane biogenesis; lipopolysaccharide biosynthesis. Activates KDO (a required 8-carbon sugar) for incorporation into bacterial lipopolysaccharide in Gram-negative bacteria. This is 3-deoxy-manno-octulosonate cytidylyltransferase from Chlorobium luteolum (strain DSM 273 / BCRC 81028 / 2530) (Pelodictyon luteolum).